The chain runs to 781 residues: AP-3 complex subunit beta (781 aa).

HEAT repeat units follow at residues 113-151 (PNLALLSINSIQRSLSDSNPDVRALALKTLSDINIASLY), 153-186 (IILHSLKKTVIDSSEVVRCQVAMTLLKLFKEQGI), 187-224 (SIKDDVMPMLKSLLADSEPSVVSAALLLFQKAFAQELQ), 294-332 (DHDLNLFLSSLKKLLHSPNAMVIVAVSKAFYQLSSPKTF), and 521-559 (PRICPDVLRRLLPQFSKEHAHVRLQILNLAAKLLSHDVD). 2 disordered regions span residues 694–713 (KPKRSASVSSVPSNTFTSSH) and 731–781 (ARQS…ETTE). Residues 699–712 (ASVSSVPSNTFTSS) show a composition bias toward polar residues. Residues 746–758 (STSEETDHTDDES) show a composition bias toward acidic residues. Positions 759-774 (GSSSGDESTESSYVSS) are enriched in low complexity.

The protein belongs to the adaptor complexes large subunit family. Adaptor protein complex 3 (AP-3) is a heterotetramer composed of 2 large adaptins (APL5 and APL6), a medium adaptin (APM3) and a small adaptin (APS3).

The protein localises to the golgi apparatus. It localises to the cytoplasmic vesicle. The protein resides in the clathrin-coated vesicle membrane. In terms of biological role, part of the AP-3 complex, an adaptor-related complex which is not clathrin-associated. The complex is associated with the Golgi region as well as more peripheral structures. It facilitates the budding of vesicles from the Golgi membrane and may be directly involved in trafficking to the vacuole. In Eremothecium gossypii (strain ATCC 10895 / CBS 109.51 / FGSC 9923 / NRRL Y-1056) (Yeast), this protein is AP-3 complex subunit beta (APL6).